Consider the following 556-residue polypeptide: 2-succinyl-5-enolpyruvyl-6-hydroxy-3-cyclohexene-1-carboxylate synthase (556 aa).

This sequence belongs to the TPP enzyme family. MenD subfamily. As to quaternary structure, homodimer. Requires Mg(2+) as cofactor. Mn(2+) is required as a cofactor. Thiamine diphosphate serves as cofactor.

It catalyses the reaction isochorismate + 2-oxoglutarate + H(+) = 5-enolpyruvoyl-6-hydroxy-2-succinyl-cyclohex-3-ene-1-carboxylate + CO2. The protein operates within quinol/quinone metabolism; 1,4-dihydroxy-2-naphthoate biosynthesis; 1,4-dihydroxy-2-naphthoate from chorismate: step 2/7. Its pathway is quinol/quinone metabolism; menaquinone biosynthesis. Catalyzes the thiamine diphosphate-dependent decarboxylation of 2-oxoglutarate and the subsequent addition of the resulting succinic semialdehyde-thiamine pyrophosphate anion to isochorismate to yield 2-succinyl-5-enolpyruvyl-6-hydroxy-3-cyclohexene-1-carboxylate (SEPHCHC). The polypeptide is 2-succinyl-5-enolpyruvyl-6-hydroxy-3-cyclohexene-1-carboxylate synthase (Saccharopolyspora erythraea (strain ATCC 11635 / DSM 40517 / JCM 4748 / NBRC 13426 / NCIMB 8594 / NRRL 2338)).